The primary structure comprises 45 residues: uncharacterized protein (45 aa).

A helical membrane pass occupies residues 5 to 25 (IFFIFALSGILAACTVGGGVS).

The protein resides in the membrane. This is an uncharacterized protein from Haemophilus influenzae (strain ATCC 51907 / DSM 11121 / KW20 / Rd).